The following is a 132-amino-acid chain: Small ribosomal subunit protein uS11 (132 aa).

This sequence belongs to the universal ribosomal protein uS11 family. As to quaternary structure, part of the 30S ribosomal subunit. Interacts with proteins S7 and S18. Binds to IF-3.

In terms of biological role, located on the platform of the 30S subunit, it bridges several disparate RNA helices of the 16S rRNA. Forms part of the Shine-Dalgarno cleft in the 70S ribosome. This chain is Small ribosomal subunit protein uS11, found in Oenococcus oeni (strain ATCC BAA-331 / PSU-1).